The chain runs to 126 residues: uncharacterized protein (126 aa).

This is an uncharacterized protein from Saccharomyces cerevisiae (strain ATCC 204508 / S288c) (Baker's yeast).